The sequence spans 474 residues: Peroxisome proliferator-activated receptor alpha (474 aa).

Residues 106-180 constitute a DNA-binding region (nuclear receptor); the sequence is NLECRVCSDK…VGMSHNAIRF (75 aa). NR C4-type zinc fingers lie at residues 109-129 and 146-168; these read CRVC…CEGC and CERM…FEKC. In terms of domain architecture, NR LBD spans 245-472; the sequence is FVIHDMETLC…HPLLQEIYRD (228 aa).

This sequence belongs to the nuclear hormone receptor family. NR1 subfamily. Heterodimer with the retinoid X receptor. As to expression, ubiquitous.

The protein localises to the nucleus. Ligand-activated transcription factor. Key regulator of lipid metabolism. Activated by lipids. Receptor for peroxisome proliferators such as hypolipidemic drugs and fatty acids. Once activated by a ligand, the receptor binds to promoter elements of target genes. Regulates the peroxisomal beta-oxidation pathway of fatty acids. The sequence is that of Peroxisome proliferator-activated receptor alpha (ppara) from Xenopus laevis (African clawed frog).